We begin with the raw amino-acid sequence, 861 residues long: Xylan 1,4-beta-xylosidase (861 aa).

Positions 1–19 are cleaved as a signal peptide; it reads MKYQLFLSLALCVGLGASA. Asp-269 (nucleophile) is an active-site residue. Residues 458-600 enclose the PA14 domain; that stretch reads DGKKGLKGTF…DYQETIAQLK (143 aa). Glu-616 functions as the Proton donor/acceptor in the catalytic mechanism.

Belongs to the glycosyl hydrolase 3 family. As to quaternary structure, exists as a large polymeric species, presumably as a homononamer.

The enzyme catalyses Hydrolysis of (1-&gt;4)-beta-D-xylans, to remove successive D-xylose residues from the non-reducing termini.. The catalysed reaction is Hydrolysis of terminal non-reducing alpha-L-arabinofuranoside residues in alpha-L-arabinosides.. The protein operates within glycan degradation; xylan degradation. Functionally, involved in degradation of plant cell wall polysaccharides. Has beta-xylosidase activity via its capacity to hydrolyze glycosidic linkages of beta-1,4-xylo-oligosaccharides of various lengths (X2 to X6), releasing xylose monomers. To a much lesser extent, also has alpha-L-arabinofuranosidase activity. Does not possess beta-D-glucosidase activity. Acts synergistically with Xyn10D-Fae1A to increase the release of xylose from xylan. The chain is Xylan 1,4-beta-xylosidase from Xylanibacter ruminicola (strain ATCC 19189 / DSM 19721 / CIP 105475 / JCM 8958 / 23) (Prevotella ruminicola).